A 645-amino-acid chain; its full sequence is Bifurcating [FeFe] hydrogenase alpha subunit (645 aa).

One can recognise a 2Fe-2S ferredoxin-type domain in the interval 1–76 (MKIYVDGREV…GMKVKTNTPE (76 aa)). [2Fe-2S] cluster is bound by residues cysteine 34, cysteine 45, cysteine 48, and cysteine 60. The 40-residue stretch at 76–115 (EIYEMRRNILELILATHNRDCTTCDRNGSCKLQKYAEDFG) folds into the 4Fe-4S His(Cys)3-ligated-type domain. [4Fe-4S] cluster is bound by residues histidine 92, cysteine 96, cysteine 99, cysteine 105, cysteine 143, cysteine 146, cysteine 149, cysteine 153, cysteine 186, cysteine 189, cysteine 192, cysteine 196, cysteine 295, cysteine 350, cysteine 482, and cysteine 486. 4Fe-4S ferredoxin-type domains follow at residues 133 to 164 (SAPV…VIEF) and 178 to 206 (DTPL…IRND). Cysteine 486 provides a ligand contact to Fe(2+). [2Fe-2S] cluster contacts are provided by cysteine 575, cysteine 580, cysteine 612, and cysteine 616.

In terms of assembly, heterotrimer composed of HydA (alpha subunit), HydB (beta subunit) and HydC (gamma subunit). Near neutral and acidic pH conditions favor oligomerization of the heterotrimeric holoenzyme. [2Fe-2S] cluster serves as cofactor. The cofactor is [4Fe-4S] cluster. Fe(2+) is required as a cofactor.

Its subcellular location is the cytoplasm. The enzyme catalyses 2 H2 + 2 oxidized [2Fe-2S]-[ferredoxin] + NAD(+) = 2 reduced [2Fe-2S]-[ferredoxin] + NADH + 3 H(+). Catalyzes the oxidation of the physiological electron carriers NADH and reduced ferredoxin, coupled to the production of H(2). Acts as a bifurcating [FeFe] hydrogenase, which uses the exergonic oxidation of reduced ferredoxin to drive the unfavorable oxidation of NADH to produce H(2). The alpha subunit contains the catalytic H-cluster. The sequence is that of Bifurcating [FeFe] hydrogenase alpha subunit from Thermotoga maritima (strain ATCC 43589 / DSM 3109 / JCM 10099 / NBRC 100826 / MSB8).